A 221-amino-acid chain; its full sequence is Large ribosomal subunit protein bL25 (221 aa).

Residues 174 to 221 are disordered; sequence SVVTVVPPTDEPTEEEVEAMEGEAATEEPEVVGEEKEEDSEEENKDEE. Positions 184 to 221 are enriched in acidic residues; the sequence is EPTEEEVEAMEGEAATEEPEVVGEEKEEDSEEENKDEE.

This sequence belongs to the bacterial ribosomal protein bL25 family. CTC subfamily. In terms of assembly, part of the 50S ribosomal subunit; part of the 5S rRNA/L5/L18/L25 subcomplex. Contacts the 5S rRNA. Binds to the 5S rRNA independently of L5 and L18.

Its function is as follows. This is one of the proteins that binds to the 5S RNA in the ribosome where it forms part of the central protuberance. The chain is Large ribosomal subunit protein bL25 from Staphylococcus haemolyticus (strain JCSC1435).